The chain runs to 179 residues: Inner membrane-spanning protein YciB (179 aa).

5 consecutive transmembrane segments (helical) span residues 22 to 42 (IYAATSALIVATAIVLIYSWV), 50 to 70 (MALITFVLVAVFGGLTLFFHN), 76 to 96 (WKVTVIYALFAGALLMSQWVM), 121 to 141 (LAWALFFIVCGLANIYIAFWL), and 149 to 169 (FKVFGLTALTLIFTLLSGVYI).

The protein belongs to the YciB family.

The protein localises to the cell inner membrane. Plays a role in cell envelope biogenesis, maintenance of cell envelope integrity and membrane homeostasis. The polypeptide is Inner membrane-spanning protein YciB (Salmonella arizonae (strain ATCC BAA-731 / CDC346-86 / RSK2980)).